The chain runs to 44 residues: Conotoxin S5.1 (44 aa).

Post-translationally, contains 3 disulfide bonds. As to expression, expressed by the venom duct.

It is found in the secreted. The polypeptide is Conotoxin S5.1 (Conus striatus (Striated cone)).